The following is a 548-amino-acid chain: Guanine nucleotide-binding protein-like 3 (548 aa).

Over residues Met1–Lys45 the composition is skewed to basic residues. Residues Met1–Glu118 form a disordered region. Positions Ala58–Thr114 form a coiled coil. A compositionally biased stretch (basic and acidic residues) spans Ala64–Asp107. Residues Cys125–Ser305 enclose the CP-type G domain. GTP is bound by residues Asn172–Asp175, Ala256–Val263, and Asp298–Ala301. The segment at Arg459 to Val548 is disordered. Residues Glu465 to Gln497 show a composition bias toward acidic residues. The span at Ser501 to Ser523 shows a compositional bias: basic and acidic residues. Polar residues predominate over residues Lys524 to Gln534.

It belongs to the TRAFAC class YlqF/YawG GTPase family.

It is found in the nucleus. The protein resides in the nucleolus. Functionally, may play a role in regulating cellular proliferation. The polypeptide is Guanine nucleotide-binding protein-like 3 (gnl3) (Xenopus tropicalis (Western clawed frog)).